The sequence spans 305 residues: MPLNLPDKLPAIELLKEENIFVIDNSRATQQDIRPLRIVILNLMPLKITTETDLVRLLSNTPLQVEISFMKIKSHTSKNTPIEHMKTFYTDFDKMREDRYDGMIITGAPVEQMDFEEVNYWDEITEIFDWARTHVTSTLYICWAAQAGLYHHYGIPKYALDKKMFGIFKHRTLLPLHPIFRGFDDEFYVPHSRHTEVRKEDILKVPELTLLSESDDSGVYMVVARGGREFFVTGHSEYSPLTLDTEYRRDVSKGLPIEIPRNYYVNDDPDKGPLVRWRGHANLLFSNWLNYFVYQETPYNIEDIR.

The Acyl-thioester intermediate role is filled by C142. Positions 163 and 192 each coordinate substrate. Catalysis depends on H235, which acts as the Proton acceptor. Residue E237 is part of the active site. Residue R249 participates in substrate binding.

It belongs to the MetA family.

It localises to the cytoplasm. It carries out the reaction L-homoserine + acetyl-CoA = O-acetyl-L-homoserine + CoA. It participates in amino-acid biosynthesis; L-methionine biosynthesis via de novo pathway; O-acetyl-L-homoserine from L-homoserine: step 1/1. Functionally, transfers an acetyl group from acetyl-CoA to L-homoserine, forming acetyl-L-homoserine. In Bacteroides fragilis (strain YCH46), this protein is Homoserine O-acetyltransferase.